Here is a 274-residue protein sequence, read N- to C-terminus: Rhamnulose-1-phosphate aldolase (274 aa).

Glu117 is a catalytic residue. Zn(2+) contacts are provided by His141, His143, and His212.

It belongs to the aldolase class II family. RhaD subfamily. As to quaternary structure, homotetramer. Requires Zn(2+) as cofactor.

Its subcellular location is the cytoplasm. It carries out the reaction L-rhamnulose 1-phosphate = (S)-lactaldehyde + dihydroxyacetone phosphate. Its pathway is carbohydrate degradation; L-rhamnose degradation; glycerone phosphate from L-rhamnose: step 3/3. In terms of biological role, catalyzes the reversible cleavage of L-rhamnulose-1-phosphate to dihydroxyacetone phosphate (DHAP) and L-lactaldehyde. This Escherichia coli O127:H6 (strain E2348/69 / EPEC) protein is Rhamnulose-1-phosphate aldolase.